We begin with the raw amino-acid sequence, 69 residues long: UPF0337 protein DIP1660 (69 aa).

2 stretches are compositionally biased toward basic and acidic residues: residues 1 to 19 (MSDFENKIEELGGKAKEAV) and 30 to 41 (DEGRADQTKADV). The interval 1 to 42 (MSDFENKIEELGGKAKEAVGEATENEQLADEGRADQTKADVK) is disordered.

Belongs to the UPF0337 (CsbD) family.

This chain is UPF0337 protein DIP1660, found in Corynebacterium diphtheriae (strain ATCC 700971 / NCTC 13129 / Biotype gravis).